Reading from the N-terminus, the 410-residue chain is Neuroserpin (410 aa).

The N-terminal stretch at 1 to 16 (MTYLELLALLALQSVV) is a signal peptide. N-linked (GlcNAc...) asparagine glycosylation is found at Asn-157, Asn-321, and Asn-401. An O-linked (Xyl...) (chondroitin sulfate) serine glycan is attached at Ser-403.

Belongs to the serpin family. In terms of tissue distribution, detected in neurons in embryonic brain cortex (at protein level). During embryonic development mostly expressed in CNS. In adult expressed in brain and much less in spinal cord, heart, kidney and testis.

The protein resides in the secreted. The protein localises to the cytoplasmic vesicle. Its subcellular location is the secretory vesicle lumen. It is found in the perikaryon. Its function is as follows. Serine protease inhibitor that inhibits plasminogen activators and plasmin but not thrombin. May be involved in the formation or reorganization of synaptic connections as well as for synaptic plasticity in the adult nervous system. May protect neurons from cell damage by tissue-type plasminogen activator. The sequence is that of Neuroserpin (Serpini1) from Mus musculus (Mouse).